Reading from the N-terminus, the 203-residue chain is Pacifastin-like protease inhibitor cvp4 (203 aa).

A signal peptide spans 1–19 (MGFLACALLVVATAHAATA). Pacifastin domains follow at residues 23-59 (PETC…CDRN), 85-121 (DEPC…CDRN), and 147-184 (DESC…CDRY). 6 cysteine pairs are disulfide-bonded: Cys26/Cys41, Cys36/Cys56, Cys39/Cys51, Cys88/Cys103, Cys98/Cys118, and Cys101/Cys113. Basic and acidic residues predominate over residues 129 to 148 (RKYPEPEKWNSEKERKKSDE). The tract at residues 129–150 (RKYPEPEKWNSEKERKKSDESC) is disordered. Intrachain disulfides connect Cys150–Cys165, Cys160–Cys181, and Cys163–Cys176.

The protein belongs to the protease inhibitor I19 family. As to expression, expressed by the venom gland.

It is found in the secreted. Its function is as follows. Inhibits trypsin activity and prophenoloxidase (PPO) activation, an enzyme essential for both clotting and insect innate immune responses. It does not inhibit activity of chymotrypsin and protease K, and has no effect on phenoloxidase (PO) activity. The sequence is that of Pacifastin-like protease inhibitor cvp4 from Pimpla hypochondriaca (Parasitoid wasp).